The following is a 245-amino-acid chain: Orotidine 5'-phosphate decarboxylase (245 aa).

Substrate is bound by residues Asp22, Lys44, 71–80 (DLKFHDIPNT), Thr131, Arg192, Gln201, Gly221, and Arg222. Catalysis depends on Lys73, which acts as the Proton donor.

Belongs to the OMP decarboxylase family. Type 1 subfamily. As to quaternary structure, homodimer.

It catalyses the reaction orotidine 5'-phosphate + H(+) = UMP + CO2. The protein operates within pyrimidine metabolism; UMP biosynthesis via de novo pathway; UMP from orotate: step 2/2. In terms of biological role, catalyzes the decarboxylation of orotidine 5'-monophosphate (OMP) to uridine 5'-monophosphate (UMP). The polypeptide is Orotidine 5'-phosphate decarboxylase (Yersinia pseudotuberculosis serotype O:3 (strain YPIII)).